We begin with the raw amino-acid sequence, 190 residues long: Threonylcarbamoyl-AMP synthase (190 aa).

The region spanning 7–190 (GDAIAAAIDV…ALTGELFRQG (184 aa)) is the YrdC-like domain.

The protein belongs to the SUA5 family. TsaC subfamily.

The protein localises to the cytoplasm. The enzyme catalyses L-threonine + hydrogencarbonate + ATP = L-threonylcarbamoyladenylate + diphosphate + H2O. Functionally, required for the formation of a threonylcarbamoyl group on adenosine at position 37 (t(6)A37) in tRNAs that read codons beginning with adenine. Catalyzes the conversion of L-threonine, HCO(3)(-)/CO(2) and ATP to give threonylcarbamoyl-AMP (TC-AMP) as the acyladenylate intermediate, with the release of diphosphate. The protein is Threonylcarbamoyl-AMP synthase of Escherichia coli O157:H7.